Consider the following 448-residue polypeptide: High mobility group B protein 15 (448 aa).

Positions 29–120 (VADPRLFMTS…LLNNYEQIYF (92 aa)) constitute an ARID domain. The segment covering 219–236 (PQQSHGVLPNTLNISANP) has biased composition (polar residues). 3 disordered regions span residues 219-270 (PQQS…RSGY), 333-352 (KKNG…LPEQ), and 366-448 (VEED…AEQN). The span at 244 to 255 (TKRRRRRKKSEI) shows a compositional bias: basic residues. A DNA-binding region (HMG box) is located at residues 263–330 (PKPNRSGYNF…RYRTEMEDYR (68 aa)). Residues 389–398 (SIETDPELEE) show a composition bias toward acidic residues. The segment covering 399-412 (PSLNPSGPNLNPNP) has biased composition (low complexity).

The protein belongs to the HMGB family.

The protein localises to the nucleus. Functionally, binds preferentially DNA with A/T-rich content. This chain is High mobility group B protein 15 (HMGB15), found in Arabidopsis thaliana (Mouse-ear cress).